A 91-amino-acid chain; its full sequence is uncharacterized protein (91 aa).

The protein resides in the plastid. It localises to the cyanelle. This is an uncharacterized protein from Cyanophora paradoxa.